Reading from the N-terminus, the 100-residue chain is MKISEEEVRHVANLSKLRFSDQETKEFASSLSKIVDMIELLNEVDTEGVPVTTTMADRKTVMREDIAQPGNNRDDLFKNVPQHQDYYIKVPAILEDGGDA.

The protein belongs to the GatC family. Heterotrimer of A, B and C subunits.

The enzyme catalyses L-glutamyl-tRNA(Gln) + L-glutamine + ATP + H2O = L-glutaminyl-tRNA(Gln) + L-glutamate + ADP + phosphate + H(+). It catalyses the reaction L-aspartyl-tRNA(Asn) + L-glutamine + ATP + H2O = L-asparaginyl-tRNA(Asn) + L-glutamate + ADP + phosphate + 2 H(+). Allows the formation of correctly charged Asn-tRNA(Asn) or Gln-tRNA(Gln) through the transamidation of misacylated Asp-tRNA(Asn) or Glu-tRNA(Gln) in organisms which lack either or both of asparaginyl-tRNA or glutaminyl-tRNA synthetases. The reaction takes place in the presence of glutamine and ATP through an activated phospho-Asp-tRNA(Asn) or phospho-Glu-tRNA(Gln). In Streptococcus agalactiae serotype III (strain NEM316), this protein is Aspartyl/glutamyl-tRNA(Asn/Gln) amidotransferase subunit C.